The chain runs to 569 residues: MPYRISRQAYAETYGPTTGDRIRLADTDLILEVEKDYTVYGDEVKFGGGKVIRDGMGQSQTPRAEGAVDTVITNALILDWWGIVKADVGLKDGRIVGIGKAGNPDTQEGVTIVVGPGTEAIAGEGHILTAGGIDTHIHFICPQQIETALASGVTTLMGGGTGPATGTNATTCTPGAFHIGRMLQAAEGLPVNLGFFGKGNASTPEALEEQVRAGACGLKLHEDWGTTPATIDACLSVADRMDVQVCIHTDTLNEAGFVEDTIAAIKGRTIHTFHTEGAGGGHAPDIIKICGEANVLPSSTNPTRPYTRNTLEEHLDMLMVCHHLDPKIPEDVAFAESRIRRETIAAEDILHDLGSFSIIASDSQAMGRVGEVITRTFQTAHKMKVQRGALPEDSARNDNHRLKRYIAKVTINPALAHGISSEVGSIETGKLADLVLWKPGFFGIRPELVVKGGSIVWAQMGDANASIPTPGPVHGRPMFGAFGKALAPSCLTFVSEAAMDADIQRQLGLERTCMAVRDTRSVGKSALKLNSALPKVSVDPQTYEVFADGELLTCEPAEVLPLAQRYLLL.

The region spanning Gly131 to Leu569 is the Urease domain. Positions 136, 138, and 219 each coordinate Ni(2+). Lys219 carries the N6-carboxylysine modification. His221 provides a ligand contact to substrate. Ni(2+)-binding residues include His248 and His274. The Proton donor role is filled by His322. Asp362 contributes to the Ni(2+) binding site.

Belongs to the metallo-dependent hydrolases superfamily. Urease alpha subunit family. As to quaternary structure, heterotrimer of UreA (gamma), UreB (beta) and UreC (alpha) subunits. Three heterotrimers associate to form the active enzyme. The cofactor is Ni cation. Carboxylation allows a single lysine to coordinate two nickel ions.

The protein resides in the cytoplasm. It carries out the reaction urea + 2 H2O + H(+) = hydrogencarbonate + 2 NH4(+). The protein operates within nitrogen metabolism; urea degradation; CO(2) and NH(3) from urea (urease route): step 1/1. The polypeptide is Urease subunit alpha (Synechococcus sp. (strain CC9605)).